We begin with the raw amino-acid sequence, 484 residues long: Protein arginine methyltransferase NDUFAF7 homolog, mitochondrial (484 aa).

The transit peptide at 1–12 directs the protein to the mitochondrion; it reads MFRSITQRVIRN.

Belongs to the NDUFAF7 family. As to quaternary structure, homodimer. Interacts with ndufs2.

The protein resides in the mitochondrion. The enzyme catalyses L-arginyl-[protein] + 2 S-adenosyl-L-methionine = N(omega),N(omega)'-dimethyl-L-arginyl-[protein] + 2 S-adenosyl-L-homocysteine + 2 H(+). Functionally, involved in the assembly or stability of mitochondrial NADH:ubiquinone oxidoreductase complex (complex I). Acts as an arginine methyltransferase and probably acts by mediating arginine methylation of ndufs2. This is Protein arginine methyltransferase NDUFAF7 homolog, mitochondrial from Dictyostelium discoideum (Social amoeba).